A 602-amino-acid chain; its full sequence is Arp2/3 complex-activating protein rickA (602 aa).

Disordered stretches follow at residues 307-484 (SSLA…AGPK), 516-535 (VEFD…KPVQ), and 555-602 (MSDS…SFVK). Residues 318–442 (TPPPPLPGNN…IPPPPPPPMA (125 aa)) are compositionally biased toward pro residues. 2 consecutive WH2 domains span residues 472 to 489 (DTSD…LRKV) and 499 to 516 (SRDL…LKKV). Residues 475 to 484 (DLMREIAGPK) show a composition bias toward basic and acidic residues. The tract at residues 537-570 (VNKLSGVASILARRVVMEMSDSSGSESDSGNWSD) is central and acidic domains. A compositionally biased stretch (low complexity) spans 555–566 (MSDSSGSESDSG). The span at 578-590 (KTLKTKRERRKIL) shows a compositional bias: basic residues. Polar residues predominate over residues 591–602 (NNRNSQKPSFVK).

Homodimer.

The protein localises to the cell surface. In terms of biological role, recruits and activates the Arp2/3 complex, which in turn leads to actin polymerization, promoting Rickettsia motility during infection. The polypeptide is Arp2/3 complex-activating protein rickA (rickA) (Rickettsia montanensis).